The chain runs to 266 residues: Elongator complex protein 6 (266 aa).

The protein belongs to the ELP6 family. As to quaternary structure, component of the elongator complex which consists of ELP1, ELP2, ELP3, ELP4, ELP5 and ELP6.

Its subcellular location is the cytoplasm. It localises to the nucleus. It participates in tRNA modification; 5-methoxycarbonylmethyl-2-thiouridine-tRNA biosynthesis. Functionally, component of the elongator complex which is required for multiple tRNA modifications, including mcm5U (5-methoxycarbonylmethyl uridine), mcm5s2U (5-methoxycarbonylmethyl-2-thiouridine), and ncm5U (5-carbamoylmethyl uridine). The elongator complex catalyzes formation of carboxymethyluridine in the wobble base at position 34 in tRNAs. Involved in cell migration. This chain is Elongator complex protein 6, found in Homo sapiens (Human).